The sequence spans 341 residues: Probable long-chain-alcohol O-fatty-acyltransferase 1 (341 aa).

Helical transmembrane passes span 7-27 (NLIEVWISALISLSYCYYISS), 36-56 (LLSILPVCILFLVLPLFLSCV), 58-78 (FCAISVLFLSWLANFKLLLFA), 120-140 (PMPKWVLAVKILVLGVLLHVY), 149-169 (FVVLALYCLHIYLEVELVLVF), 233-253 (MFAGVMASFFVSGLMHELLYF), 261-281 (TWEVTCFFVLHGAATATEIAV), and 293-313 (AVSGLVVLTFVSVTGVWLFLA).

It belongs to the wax synthase family.

It localises to the membrane. It carries out the reaction a long chain fatty alcohol + a fatty acyl-CoA = a wax ester + CoA. Functionally, catalyzes the final step in the synthesis of long-chain linear esters (waxes). This Arabidopsis thaliana (Mouse-ear cress) protein is Probable long-chain-alcohol O-fatty-acyltransferase 1 (AT1).